The sequence spans 366 residues: Sigma54-dependent transcriptional activator SfnR (366 aa).

A Sigma-54 factor interaction domain is found at 21-250; that stretch reads QVFEDPRSQA…LENVIHHSLL (230 aa). ATP-binding positions include 49–56 and 112–121; these read GETGTGKE and ANGGTLFLDE.

Functionally, involved in the dimethyl sulfide degradation pathway. Activates the expression of sfnG and sfnF. This is Sigma54-dependent transcriptional activator SfnR from Pseudomonas putida (Arthrobacter siderocapsulatus).